The sequence spans 638 residues: Fructose-1,6-bisphosphatase class 3 (638 aa).

This sequence belongs to the FBPase class 3 family. The cofactor is Mn(2+).

The catalysed reaction is beta-D-fructose 1,6-bisphosphate + H2O = beta-D-fructose 6-phosphate + phosphate. Its pathway is carbohydrate biosynthesis; gluconeogenesis. The chain is Fructose-1,6-bisphosphatase class 3 from Pediococcus pentosaceus (strain ATCC 25745 / CCUG 21536 / LMG 10740 / 183-1w).